Reading from the N-terminus, the 215-residue chain is GTP-binding nuclear protein Ran (215 aa).

The Small GTPase Ran-type domain maps to 6 to 170; that stretch reads DIPTFKLVLV…LWLARKLLGD (165 aa). GTP-binding positions include 17-24, 35-41, G67, 121-124, and 149-151; these read DGGTGKTT, EKKYVAT, NKVD, and SAK. A switch-I region spans residues 36–44; it reads KKYVATLGV. Residues 67–83 are switch-II; it reads GQEKFGGLRDGYYIQGQ.

It belongs to the small GTPase superfamily. Ran family. In terms of assembly, found in a nuclear export complex with RanGTP, exportin and pre-miRNA.

It is found in the nucleus. GTP-binding protein involved in nucleocytoplasmic transport. Required for the import of protein into the nucleus and also for RNA export. Involved in chromatin condensation and control of cell cycle. The protein is GTP-binding nuclear protein Ran of Brugia malayi (Filarial nematode worm).